The following is a 377-amino-acid chain: UPF0754 membrane protein GTNG_0550 (377 aa).

Helical transmembrane passes span 7–27 (LLFMMAVGALIGGMTNFIAIV) and 357–377 (YLGALLGAMIGAVQGIIGLWL).

The protein belongs to the UPF0754 family.

The protein localises to the cell membrane. In Geobacillus thermodenitrificans (strain NG80-2), this protein is UPF0754 membrane protein GTNG_0550.